The chain runs to 306 residues: Pyridoxal 5'-phosphate synthase subunit PdxS (306 aa).

Position 36 (aspartate 36) interacts with D-ribose 5-phosphate. Residue lysine 93 is the Schiff-base intermediate with D-ribose 5-phosphate of the active site. A D-ribose 5-phosphate-binding site is contributed by glycine 165. Residue arginine 177 coordinates D-glyceraldehyde 3-phosphate. D-ribose 5-phosphate contacts are provided by residues glycine 226 and 247 to 248 (GS).

It belongs to the PdxS/SNZ family. In the presence of PdxT, forms a dodecamer of heterodimers.

It catalyses the reaction aldehydo-D-ribose 5-phosphate + D-glyceraldehyde 3-phosphate + L-glutamine = pyridoxal 5'-phosphate + L-glutamate + phosphate + 3 H2O + H(+). It participates in cofactor biosynthesis; pyridoxal 5'-phosphate biosynthesis. Catalyzes the formation of pyridoxal 5'-phosphate from ribose 5-phosphate (RBP), glyceraldehyde 3-phosphate (G3P) and ammonia. The ammonia is provided by the PdxT subunit. Can also use ribulose 5-phosphate and dihydroxyacetone phosphate as substrates, resulting from enzyme-catalyzed isomerization of RBP and G3P, respectively. The chain is Pyridoxal 5'-phosphate synthase subunit PdxS from Salinispora arenicola (strain CNS-205).